The chain runs to 203 residues: MNPEYDYLFKLLLIGDSGVGKSCLLLRFADDTYTESYISTIGVDFKIRTFELEGKTVKLQIWDTAGQERFRTITSSYYRGAHGIIIVYDVTDQDSFNNVKQWLQEIDRYAVEGVNRLLVGNKSDMVDKKVVEYSVAKEFADSLNIPFLETSAKDSTNVEQAFLTMSRQIKERMGNNTFASSNAKSSVKVGQGTNVSQSSSNCC.

Residues 15–23 (GDSGVGKSC), 33–40 (YTESYIST), 63–67 (DTAGQ), 121–124 (NKSD), and 151–153 (SAK) each bind GTP. The short motif at 37 to 45 (YISTIGVDF) is the Effector region element. T164 carries the post-translational modification Phosphothreonine. S-geranylgeranyl cysteine attachment occurs at residues C202 and C203.

It belongs to the small GTPase superfamily. Rab family.

The protein resides in the endoplasmic reticulum membrane. The protein localises to the golgi apparatus membrane. It localises to the cytoplasm. It is found in the preautophagosomal structure membrane. Its activity is regulated as follows. Rab activation is generally mediated by a guanine exchange factor (GEF), while inactivation through hydrolysis of bound GTP is catalyzed by a GTPase activating protein (GAP). The small GTPases Rab are key regulators of intracellular membrane trafficking, from the formation of transport vesicles to their fusion with membranes. Rabs cycle between an inactive GDP-bound form and an active GTP-bound form that is able to recruit to membranes different set of downstream effectors directly responsible for vesicle formation, movement, tethering and fusion. Ypt1 regulates the trafficking of secretory vesicles from the endoplasmic reticulum (ER) to the Golgi. Plays a role in the initial events of the autophagic vacuole development which take place at specialized regions of the endoplasmic reticulum. Also involved in the recycling of membrane proteins. The sequence is that of GTP-binding protein ypt1 (ypt1) from Schizosaccharomyces pombe (strain 972 / ATCC 24843) (Fission yeast).